The following is a 98-amino-acid chain: Putative septation protein SpoVG (98 aa).

This sequence belongs to the SpoVG family.

Functionally, essential for sporulation. Interferes with or is a negative regulator of the pathway leading to asymmetric septation. The sequence is that of Putative septation protein SpoVG from Shouchella clausii (strain KSM-K16) (Alkalihalobacillus clausii).